The sequence spans 90 residues: uncharacterized protein (90 aa).

Residues 69–89 (LLYIFLGAMIVIIFLVIKNQL) form a helical membrane-spanning segment.

The protein belongs to the IIV-6 466R family.

Its subcellular location is the membrane. This is an uncharacterized protein from Invertebrate iridescent virus 6 (IIV-6).